We begin with the raw amino-acid sequence, 647 residues long: Threonine--tRNA ligase (647 aa).

Residues 1 to 61 (MINITFPDGA…TEDGSIEIVT (61 aa)) enclose the TGS domain. Residues 242–540 (DHRKLGKELD…LIENYKGAFP (299 aa)) form a catalytic region. Cys336, His387, and His517 together coordinate Zn(2+).

Belongs to the class-II aminoacyl-tRNA synthetase family. As to quaternary structure, homodimer. It depends on Zn(2+) as a cofactor.

The protein resides in the cytoplasm. It catalyses the reaction tRNA(Thr) + L-threonine + ATP = L-threonyl-tRNA(Thr) + AMP + diphosphate + H(+). Functionally, catalyzes the attachment of threonine to tRNA(Thr) in a two-step reaction: L-threonine is first activated by ATP to form Thr-AMP and then transferred to the acceptor end of tRNA(Thr). Also edits incorrectly charged L-seryl-tRNA(Thr). This is Threonine--tRNA ligase from Streptococcus pneumoniae (strain ATCC 700669 / Spain 23F-1).